A 431-amino-acid polypeptide reads, in one-letter code: Enolase (431 aa).

A (2R)-2-phosphoglycerate-binding site is contributed by Q175. Catalysis depends on E217, which acts as the Proton donor. The Mg(2+) site is built by D254, E295, and D322. (2R)-2-phosphoglycerate contacts are provided by K347, R376, S377, and K398. The active-site Proton acceptor is K347.

Belongs to the enolase family. Requires Mg(2+) as cofactor.

It is found in the cytoplasm. The protein resides in the secreted. It localises to the cell surface. The enzyme catalyses (2R)-2-phosphoglycerate = phosphoenolpyruvate + H2O. Its pathway is carbohydrate degradation; glycolysis; pyruvate from D-glyceraldehyde 3-phosphate: step 4/5. In terms of biological role, catalyzes the reversible conversion of 2-phosphoglycerate (2-PG) into phosphoenolpyruvate (PEP). It is essential for the degradation of carbohydrates via glycolysis. The chain is Enolase from Anaplasma marginale (strain St. Maries).